The chain runs to 478 residues: Ninja-family protein 7 (478 aa).

3 disordered regions span residues 1 to 247, 336 to 374, and 454 to 478; these read MDDD…LTPG, SFTAKDKADQTGTKQVDDGKKPREAGASSSAHAEDEKKA, and DAPAQDNSATLPAFPAGNQATSAEN. Positions 23–35 are enriched in basic and acidic residues; that stretch reads KARDAPLEPKAEP. The span at 169-179 shows a compositional bias: polar residues; the sequence is ISISTDDGSTG. The span at 180 to 189 shows a compositional bias: acidic residues; it reads ENEDVAESEA. Over residues 233 to 242 the composition is skewed to low complexity; sequence SFSGSESSSG. The span at 339-359 shows a compositional bias: basic and acidic residues; that stretch reads AKDKADQTGTKQVDDGKKPRE.

Belongs to the Ninja family.

It localises to the nucleus. This Zea mays (Maize) protein is Ninja-family protein 7.